Consider the following 109-residue polypeptide: Large ribosomal subunit protein uL22 (109 aa).

It belongs to the universal ribosomal protein uL22 family. As to quaternary structure, part of the 50S ribosomal subunit.

Its function is as follows. This protein binds specifically to 23S rRNA; its binding is stimulated by other ribosomal proteins, e.g. L4, L17, and L20. It is important during the early stages of 50S assembly. It makes multiple contacts with different domains of the 23S rRNA in the assembled 50S subunit and ribosome. In terms of biological role, the globular domain of the protein is located near the polypeptide exit tunnel on the outside of the subunit, while an extended beta-hairpin is found that lines the wall of the exit tunnel in the center of the 70S ribosome. The sequence is that of Large ribosomal subunit protein uL22 from Blochmanniella pennsylvanica (strain BPEN).